The following is a 429-amino-acid chain: UPF0597 protein GSU1527 (429 aa).

This sequence belongs to the UPF0597 family.

The sequence is that of UPF0597 protein GSU1527 from Geobacter sulfurreducens (strain ATCC 51573 / DSM 12127 / PCA).